Consider the following 442-residue polypeptide: tRNA-2-methylthio-N(6)-dimethylallyladenosine synthase (442 aa).

In terms of domain architecture, MTTase N-terminal spans 5–122 (KKVFIKTLGC…LPEMIKQKQK (118 aa)). Cys-14, Cys-51, Cys-85, Cys-159, Cys-163, and Cys-166 together coordinate [4Fe-4S] cluster. The Radical SAM core domain occupies 145 to 378 (KAEGAKAYVS…DLLNSNAQII (234 aa)). In terms of domain architecture, TRAM spans 380 to 442 (RQMVGTNQRI…LPNSLRGELI (63 aa)).

This sequence belongs to the methylthiotransferase family. MiaB subfamily. In terms of assembly, monomer. The cofactor is [4Fe-4S] cluster.

It localises to the cytoplasm. The catalysed reaction is N(6)-dimethylallyladenosine(37) in tRNA + (sulfur carrier)-SH + AH2 + 2 S-adenosyl-L-methionine = 2-methylsulfanyl-N(6)-dimethylallyladenosine(37) in tRNA + (sulfur carrier)-H + 5'-deoxyadenosine + L-methionine + A + S-adenosyl-L-homocysteine + 2 H(+). Its function is as follows. Catalyzes the methylthiolation of N6-(dimethylallyl)adenosine (i(6)A), leading to the formation of 2-methylthio-N6-(dimethylallyl)adenosine (ms(2)i(6)A) at position 37 in tRNAs that read codons beginning with uridine. The sequence is that of tRNA-2-methylthio-N(6)-dimethylallyladenosine synthase from Francisella tularensis subsp. holarctica (strain LVS).